The primary structure comprises 611 residues: Probable cysteine desulfurase 1 (611 aa).

Residues 1–208 are cargo-loading domain; it reads MRATQLYAAS…HEMVDVFDIQ (208 aa). Lys-428 is subject to N6-(pyridoxal phosphate)lysine. Cys-566 (cysteine persulfide intermediate) is an active-site residue.

It belongs to the class-V pyridoxal-phosphate-dependent aminotransferase family. Csd subfamily. As to quaternary structure, there are 1-2 copies of this protein in each type 2A encapsulin shell. The cofactor is pyridoxal 5'-phosphate.

Its subcellular location is the encapsulin nanocompartment. The catalysed reaction is (sulfur carrier)-H + L-cysteine = (sulfur carrier)-SH + L-alanine. Its function is as follows. Cargo protein of a type 2A encapsulin nanocompartment involved in sulfur metabolism. Cysteine desulfurases mobilize the sulfur from L-cysteine to yield L-alanine, an essential step in sulfur metabolism for biosynthesis of a variety of sulfur-containing biomolecules. The polypeptide is Probable cysteine desulfurase 1 (Mycobacterium leprae (strain TN)).